The sequence spans 134 residues: Small ribosomal subunit protein bS16 (134 aa).

The tract at residues 79–134 (AGIAKRPSRNNPTKGEPGKKAQERLALAKQAEEEASAKAAEAAAAAAAPAEEAASE) is disordered. The span at 115–134 (AKAAEAAAAAAAPAEEAASE) shows a compositional bias: low complexity.

This sequence belongs to the bacterial ribosomal protein bS16 family.

This Brucella abortus (strain S19) protein is Small ribosomal subunit protein bS16.